The following is a 180-amino-acid chain: MNAAQLSDWHPAPSSISPRARGWLQNRGSLTQLIQRRCCSEFSVKPVFQSLATVCDDELAVMNLRRDELALVREVYLYCGETPVVFAHSVVARKHLRGAWRSLIGLGNKSLGTVLFTNPVVKRTPLRFKKLTAAHPLFSRACRKLRVQPGNLWARRSLFTLHGQSILVTEVFLPSILELA.

The substrate site is built by R73, L111, and E170.

The protein belongs to the UbiC family.

The protein resides in the cytoplasm. The enzyme catalyses chorismate = 4-hydroxybenzoate + pyruvate. It participates in cofactor biosynthesis; ubiquinone biosynthesis. Its function is as follows. Removes the pyruvyl group from chorismate, with concomitant aromatization of the ring, to provide 4-hydroxybenzoate (4HB) for the ubiquinone pathway. The sequence is that of Probable chorismate pyruvate-lyase from Nitrosospira multiformis (strain ATCC 25196 / NCIMB 11849 / C 71).